A 391-amino-acid polypeptide reads, in one-letter code: ETS-related transcription factor Elf-3 (391 aa).

Positions 65–151 (DPLAVLHLAE…AQLRDLTSNS (87 aa)) constitute a PNT domain. A disordered region spans residues 200-271 (YCSTYGPGAP…HGKRKRGRPR (72 aa)). A compositionally biased stretch (polar residues) spans 211 to 229 (PGSSDVSTARTATPQSSHA). The span at 242-261 (TESKVFPRDGFPDYKKGEPK) shows a compositional bias: basic and acidic residues. Positions 262–271 (HGKRKRGRPR) are enriched in basic residues. Residues 293–375 (THLWEFIRDI…DGRRLVYKFG (83 aa)) constitute a DNA-binding region (ETS).

It belongs to the ETS family. Interacts with TBP. Interacts with CREBBP and EP300; these act as transcriptional coactivators of ELF3 and positively modulate its function. Interacts with XRCC5/KU86 and XRCC6/KU70; these inhibit the ability of ELF3 to bind DNA and negatively modulate its transcriptional activity. Associated with CLND7 and POU2F3. Interacts with ZNF768. As to expression, expressed in small intestine, colon, lung, kidney and uterus. Also expressed in the corneal epithelium and conjunctiva of the developing and adult eye. Not detected in liver, spleen, thymus, brain, heart, skeletal muscle or ovary.

Its subcellular location is the cytoplasm. It is found in the nucleus. Transcriptional activator that binds and transactivates ETS sequences containing the consensus nucleotide core sequence GGA[AT]. Acts synergistically with POU2F3 to transactivate the SPRR2A promoter and with RUNX1 to transactivate the ANGPT1 promoter. Also transactivates collagenase, CCL20, CLND7, FLG, KRT8, NOS2, PTGS2, SPRR2B, TGFBR2 and TGM3 promoters. Represses KRT4 promoter activity. Involved in mediating vascular inflammation. May play an important role in epithelial cell differentiation and tumorigenesis. May be a critical downstream effector of the ERBB2 signaling pathway. May be associated with mammary gland development and involution. Plays an important role in the regulation of transcription with TATA-less promoters in preimplantation embryos, which is essential in preimplantation development. The protein is ETS-related transcription factor Elf-3 of Mus musculus (Mouse).